The sequence spans 473 residues: Eukaryotic translation initiation factor 2 subunit gamma (473 aa).

The tr-type G domain occupies 40 to 250 (QATINIGTIG…AICNIAPPNY (211 aa)). Residues 49–56 (GHVAHGKS) form a G1 region. 52-57 (AHGKSS) serves as a coordination point for GTP. Positions 77 to 81 (NITIK) are G2. The segment at 135-138 (DCPG) is G3. GTP contacts are provided by residues 193 to 196 (NKMD) and 228 to 230 (SAQ). A G4 region spans residues 193–196 (NKMD). The G5 stretch occupies residues 228–230 (SAQ). The tract at residues 458–470 (GKVRSGGTLCEVV) is interacts with CDC123.

Belongs to the TRAFAC class translation factor GTPase superfamily. Classic translation factor GTPase family. EIF2G subfamily. As to quaternary structure, eukaryotic translation initiation factor 2 eIF2 is a heterotrimeric complex composed of an alpha, a beta and a gamma subunit. The factors eIF-1, eIF-2, eIF-3, TIF5/eIF-5 and methionyl-tRNAi form a multifactor complex (MFC) that may bind to the 40S ribosome.

Its subcellular location is the cytoplasm. The protein localises to the cytosol. The enzyme catalyses GTP + H2O = GDP + phosphate + H(+). Its function is as follows. As a subunit of eukaryotic initiation factor 2 eIF2, involved in the early steps of protein synthesis. In the presence of GTP, eIF-2 forms a ternary complex with initiator tRNA Met-tRNAi and then recruits the 40S ribosomal complex and initiation factors eIF-1, eIF-1A and eIF-3 to form the 43S pre-initiation complex (43S PIC), a step that determines the rate of protein translation. The 43S PIC binds to mRNA and scans downstream to the initiation codon, where it forms a 48S initiation complex by codon-anticodon base pairing. This leads to the displacement of eIF-1 to allow GTPase-activating protein (GAP) eIF-5-mediated hydrolysis of eIF2-bound GTP. Hydrolysis of GTP and release of Pi, which makes GTP hydrolysis irreversible, causes the release of the eIF-2-GDP binary complex from the 40S subunit, an event that is essential for the subsequent joining of the 60S ribosomal subunit to form an elongation-competent 80S ribosome. In order for eIF-2 to recycle and catalyze another round of initiation, the GDP bound to eIF-2 must be exchanged with GTP by way of a reaction catalyzed by GDP-GTP exchange factor (GEF) eIF-2B. The chain is Eukaryotic translation initiation factor 2 subunit gamma from Cryptococcus neoformans var. grubii serotype A (strain H99 / ATCC 208821 / CBS 10515 / FGSC 9487) (Filobasidiella neoformans var. grubii).